Reading from the N-terminus, the 901-residue chain is HTH-type transcriptional regulator MalT (901 aa).

39-46 (SPAGYGKT) contributes to the ATP binding site. The HTH luxR-type domain occupies 829-894 (ELIRTSPLTQ…DAVQHAQQLL (66 aa)). The H-T-H motif DNA-binding region spans 853–872 (NEQIAGELAVAATTIKTHIR).

Belongs to the MalT family. Monomer in solution. Oligomerizes to an active state in the presence of the positive effectors ATP and maltotriose.

Activated by ATP and maltotriose, which are both required for DNA binding. Positively regulates the transcription of the maltose regulon whose gene products are responsible for uptake and catabolism of malto-oligosaccharides. Specifically binds to the promoter region of its target genes, recognizing a short DNA motif called the MalT box. This chain is HTH-type transcriptional regulator MalT, found in Salmonella typhimurium (strain LT2 / SGSC1412 / ATCC 700720).